The sequence spans 78 residues: Small integral membrane protein 10-like protein 2A (78 aa).

This Homo sapiens (Human) protein is Small integral membrane protein 10-like protein 2A.